The sequence spans 314 residues: Olfactory receptor 5P67 (314 aa).

Topologically, residues methionine 1–valine 28 are extracellular. Asparagine 8 is a glycosylation site (N-linked (GlcNAc...) asparagine). A helical transmembrane segment spans residues isoleucine 29–isoleucine 49. Topologically, residues leucine 50 to glutamine 57 are cytoplasmic. The helical transmembrane segment at leucine 58–serine 78 threads the bilayer. The Extracellular portion of the chain corresponds to serine 79–isoleucine 102. Residues cysteine 100 and cysteine 192 are joined by a disulfide bond. A helical membrane pass occupies residues glutamine 103–tyrosine 123. The Cytoplasmic segment spans residues aspartate 124 to serine 136. Residues threonine 137 to leucine 157 form a helical membrane-spanning segment. At asparagine 158 to valine 199 the chain is on the extracellular side. Residues valine 200–serine 220 traverse the membrane as a helical segment. The Cytoplasmic segment spans residues tyrosine 221–alanine 240. The chain crosses the membrane as a helical span at residues phenylalanine 241–isoleucine 261. Topologically, residues tyrosine 262 to asparagine 274 are extracellular. Asparagine 268 is a glycosylation site (N-linked (GlcNAc...) asparagine). The chain crosses the membrane as a helical span at residues lysine 275 to leucine 295. Residues arginine 296–serine 314 lie on the Cytoplasmic side of the membrane.

It belongs to the G-protein coupled receptor 1 family.

The protein resides in the cell membrane. Its function is as follows. Potential odorant receptor. This Mus musculus (Mouse) protein is Olfactory receptor 5P67.